The primary structure comprises 305 residues: Non-homologous end joining protein Ku (305 aa).

In terms of domain architecture, Ku spans 16-202 (SLVSFGISLI…KVDPEQLSLA (187 aa)). Residues 263-305 (GEENGRKKSVSGAQHRSRRKSKGEQKLKVVRSGSSSDKRRKSA) form a disordered region.

Belongs to the prokaryotic Ku family. As to quaternary structure, homodimer. Interacts with LigD.

Its function is as follows. With LigD forms a non-homologous end joining (NHEJ) DNA repair enzyme, which repairs dsDNA breaks with reduced fidelity. Binds linear dsDNA with 5'- and 3'- overhangs but not closed circular dsDNA nor ssDNA. Recruits and stimulates the ligase activity of LigD. This chain is Non-homologous end joining protein Ku, found in Acidobacterium capsulatum (strain ATCC 51196 / DSM 11244 / BCRC 80197 / JCM 7670 / NBRC 15755 / NCIMB 13165 / 161).